A 474-amino-acid polypeptide reads, in one-letter code: Glutamate--tRNA ligase (474 aa).

A 'HIGH' region motif is present at residues 9–19; the sequence is PSPTGYLHVGG. The 'KMSKS' region motif lies at 240–244; the sequence is KLSKR. Lys243 contacts ATP.

The protein belongs to the class-I aminoacyl-tRNA synthetase family. Glutamate--tRNA ligase type 1 subfamily. As to quaternary structure, monomer.

The protein localises to the cytoplasm. The enzyme catalyses tRNA(Glu) + L-glutamate + ATP = L-glutamyl-tRNA(Glu) + AMP + diphosphate. Its function is as follows. Catalyzes the attachment of glutamate to tRNA(Glu) in a two-step reaction: glutamate is first activated by ATP to form Glu-AMP and then transferred to the acceptor end of tRNA(Glu). This is Glutamate--tRNA ligase from Aliivibrio salmonicida (strain LFI1238) (Vibrio salmonicida (strain LFI1238)).